We begin with the raw amino-acid sequence, 546 residues long: Chaperonin GroEL 1 (546 aa).

Residues 30-33, Lys51, 87-91, Gly415, 479-481, and Asp495 each bind ATP; these read TLGP, DGTTT, and NAA. The interval 526 to 546 is disordered; sequence KEDAPMPGGMPGGMGGMGMDM. Over residues 534–546 the composition is skewed to gly residues; the sequence is GMPGGMGGMGMDM.

This sequence belongs to the chaperonin (HSP60) family. Forms a cylinder of 14 subunits composed of two heptameric rings stacked back-to-back. Interacts with the co-chaperonin GroES.

It localises to the cytoplasm. It carries out the reaction ATP + H2O + a folded polypeptide = ADP + phosphate + an unfolded polypeptide.. Functionally, together with its co-chaperonin GroES, plays an essential role in assisting protein folding. The GroEL-GroES system forms a nano-cage that allows encapsulation of the non-native substrate proteins and provides a physical environment optimized to promote and accelerate protein folding. This chain is Chaperonin GroEL 1, found in Burkholderia pseudomallei (strain 1106a).